The chain runs to 414 residues: Tyrosine--tRNA ligase (414 aa).

Y35 contacts L-tyrosine. Positions P40–H49 match the 'HIGH' region motif. L-tyrosine is bound by residues Y164 and Q168. Residues K226–T230 carry the 'KMSKS' region motif. K229 contacts ATP. Residues T347–K414 form the S4 RNA-binding domain.

This sequence belongs to the class-I aminoacyl-tRNA synthetase family. TyrS type 1 subfamily. As to quaternary structure, homodimer.

Its subcellular location is the cytoplasm. It catalyses the reaction tRNA(Tyr) + L-tyrosine + ATP = L-tyrosyl-tRNA(Tyr) + AMP + diphosphate + H(+). Catalyzes the attachment of tyrosine to tRNA(Tyr) in a two-step reaction: tyrosine is first activated by ATP to form Tyr-AMP and then transferred to the acceptor end of tRNA(Tyr). This is Tyrosine--tRNA ligase from Mycoplasma mycoides subsp. mycoides SC (strain CCUG 32753 / NCTC 10114 / PG1).